Here is a 511-residue protein sequence, read N- to C-terminus: MSNKLAALIILDGFGLRDETVGNAVAQAKKPNFDRYWNKYPHQTLTASGEAVGLPDGQMGNSEVGHLNIGAGRIVYQSLTRVNVAIREGEFEQNETFLAAMKHVKEKGTNLHLFGLLSDGGVHSHIHHLYALLKLAKKEGVENVYIHGFLDGRDVGPQTAEKYIKELQDQIEEIGVGEIATLSGRYYSMDRDKRWDRVEKAYRAMAYGEGPKYQNPLDVVKDSYENGIYDEFVIPSVITKENGEPVATIKDNDAVIFYNFRPDRAIQISNTFTNDDFRDFDRGDKHPKNLHFVCLTHFSETVDGYVAFKPVNLDNTVGEVLSQNGLKQLRIAETEKYPHVTFFMSGGREEKFPGEERILIDSPKVATYDLKPEMSAYEVKDALVKEIEAEKHNAIILNFANPDMVGHSGKVEPTVKAIEAVDECLGEVVDAILAKGGYAIITADHGNADVLITEEGKPHTAHTTNPVPVIVTKEGVTLREGGILGDLAPTLLDLLGVEKPKEMTGSSLIQK.

Residue Asp12 coordinates Mn(2+). Tyr36 bears the Phosphotyrosine mark. Ser62 provides a ligand contact to Mn(2+). The Phosphoserine intermediate role is filled by Ser62. Substrate-binding positions include His123, 153-154 (RD), Arg185, Arg191, 261-264 (RPDR), and Lys336. 5 residues coordinate Mn(2+): Asp403, His407, Asp444, His445, and His462.

Belongs to the BPG-independent phosphoglycerate mutase family. Monomer. Requires Mn(2+) as cofactor.

It catalyses the reaction (2R)-2-phosphoglycerate = (2R)-3-phosphoglycerate. The protein operates within carbohydrate degradation; glycolysis; pyruvate from D-glyceraldehyde 3-phosphate: step 3/5. Its function is as follows. Essential for rapid growth and for sporulation. Catalyzes the interconversion of 2-phosphoglycerate and 3-phosphoglycerate. The sequence is that of 2,3-bisphosphoglycerate-independent phosphoglycerate mutase from Bacillus licheniformis (strain ATCC 14580 / DSM 13 / JCM 2505 / CCUG 7422 / NBRC 12200 / NCIMB 9375 / NCTC 10341 / NRRL NRS-1264 / Gibson 46).